We begin with the raw amino-acid sequence, 195 residues long: Interferon tau-2 (195 aa).

A signal peptide spans 1-23; it reads MAFVLSLLMALVLVSYGPGGSLG. Intrachain disulfides connect cysteine 24-cysteine 122 and cysteine 52-cysteine 162.

The protein belongs to the alpha/beta interferon family. IFN-alphaII subfamily. As to expression, constitutively and exclusively expressed in the mononuclear cells of the extraembryonic trophectoderm.

It is found in the secreted. In terms of biological role, paracrine hormone primarily responsible for maternal recognition of pregnancy. Interacts with endometrial receptors, probably type I interferon receptors, and blocks estrogen receptor expression, preventing the estrogen-induced increase in oxytocin receptor expression in the endometrium. This results in the suppression of the pulsatile endometrial release of the luteolytic hormone prostaglandin F2-alpha, hindering the regression of the corpus luteum (luteolysis) and therefore a return to ovarian cyclicity. This, and a possible direct effect of IFN-tau on prostaglandin synthesis, leads in turn to continued ovarian progesterone secretion, which stimulates the secretion by the endometrium of the nutrients required for the growth of the conceptus. In summary, displays particularly high antiviral and antiproliferative potency concurrently with particular weak cytotoxicity, high antiluteolytic activity and immunomodulatory properties. In contrast with other IFNs, IFN-tau is not virally inducible. This Ovis aries (Sheep) protein is Interferon tau-2 (IFNT2).